The primary structure comprises 248 residues: 3-deoxy-manno-octulosonate cytidylyltransferase (248 aa).

It belongs to the KdsB family. Mg(2+) is required as a cofactor.

It localises to the cytoplasm. It catalyses the reaction 3-deoxy-alpha-D-manno-oct-2-ulosonate + CTP = CMP-3-deoxy-beta-D-manno-octulosonate + diphosphate. It participates in nucleotide-sugar biosynthesis; CMP-3-deoxy-D-manno-octulosonate biosynthesis; CMP-3-deoxy-D-manno-octulosonate from 3-deoxy-D-manno-octulosonate and CTP: step 1/1. Its pathway is bacterial outer membrane biogenesis; lipopolysaccharide biosynthesis. Its function is as follows. Activates KDO (a required 8-carbon sugar) for incorporation into bacterial lipopolysaccharide in Gram-negative bacteria. The chain is 3-deoxy-manno-octulosonate cytidylyltransferase from Escherichia coli O157:H7.